We begin with the raw amino-acid sequence, 250 residues long: NADH-quinone oxidoreductase subunit C (250 aa).

Residues 193–250 (GMTPPLPGDEKADMPPIDDPMVTEGPEDTGAGARANAKAAEGTPADPPAMDDEEEDDA) form a disordered region. A compositionally biased stretch (low complexity) spans 222 to 236 (GAGARANAKAAEGTP). Acidic residues predominate over residues 241–250 (AMDDEEEDDA).

The protein belongs to the complex I 30 kDa subunit family. NDH-1 is composed of 14 different subunits. Subunits NuoB, C, D, E, F, and G constitute the peripheral sector of the complex.

The protein localises to the cell inner membrane. The enzyme catalyses a quinone + NADH + 5 H(+)(in) = a quinol + NAD(+) + 4 H(+)(out). Its function is as follows. NDH-1 shuttles electrons from NADH, via FMN and iron-sulfur (Fe-S) centers, to quinones in the respiratory chain. The immediate electron acceptor for the enzyme in this species is believed to be ubiquinone. Couples the redox reaction to proton translocation (for every two electrons transferred, four hydrogen ions are translocated across the cytoplasmic membrane), and thus conserves the redox energy in a proton gradient. The chain is NADH-quinone oxidoreductase subunit C from Erythrobacter litoralis (strain HTCC2594).